Reading from the N-terminus, the 465-residue chain is Ribulose bisphosphate carboxylase large chain (465 aa).

K4 carries the post-translational modification N6,N6,N6-trimethyllysine. Substrate-binding residues include N113 and T163. Catalysis depends on K165, which acts as the Proton acceptor. Residue K167 participates in substrate binding. Mg(2+)-binding residues include K191, D193, and E194. K191 bears the N6-carboxylysine mark. H284 (proton acceptor) is an active-site residue. Residues R285, H317, and S369 each contribute to the substrate site.

This sequence belongs to the RuBisCO large chain family. Type I subfamily. As to quaternary structure, heterohexadecamer of 8 large chains and 8 small chains; disulfide-linked. The disulfide link is formed within the large subunit homodimers. The cofactor is Mg(2+). In terms of processing, the disulfide bond which can form in the large chain dimeric partners within the hexadecamer appears to be associated with oxidative stress and protein turnover.

It localises to the plastid. The protein resides in the chloroplast. The enzyme catalyses 2 (2R)-3-phosphoglycerate + 2 H(+) = D-ribulose 1,5-bisphosphate + CO2 + H2O. The catalysed reaction is D-ribulose 1,5-bisphosphate + O2 = 2-phosphoglycolate + (2R)-3-phosphoglycerate + 2 H(+). In terms of biological role, ruBisCO catalyzes two reactions: the carboxylation of D-ribulose 1,5-bisphosphate, the primary event in carbon dioxide fixation, as well as the oxidative fragmentation of the pentose substrate in the photorespiration process. Both reactions occur simultaneously and in competition at the same active site. In Morus rubra (Red mulberry), this protein is Ribulose bisphosphate carboxylase large chain.